The following is a 322-amino-acid chain: HPr kinase/phosphorylase (322 aa).

Active-site residues include histidine 153 and lysine 174. Position 168–175 (168–175 (GRSGLGKS)) interacts with ATP. Serine 175 lines the Mg(2+) pocket. Residue aspartate 192 is the Proton acceptor; for phosphorylation activity. Proton donor; for dephosphorylation activity of the active site. Positions 217 to 226 (MEIRGLGVVD) are important for the catalytic mechanism of both phosphorylation and dephosphorylation. Position 218 (glutamate 218) interacts with Mg(2+). Residue arginine 259 is part of the active site. An important for the catalytic mechanism of dephosphorylation region spans residues 280–285 (PIFPGK).

Belongs to the HPrK/P family. Homohexamer. The cofactor is Mg(2+).

The enzyme catalyses [HPr protein]-L-serine + ATP = [HPr protein]-O-phospho-L-serine + ADP + H(+). The catalysed reaction is [HPr protein]-O-phospho-L-serine + phosphate + H(+) = [HPr protein]-L-serine + diphosphate. Catalyzes the ATP- as well as the pyrophosphate-dependent phosphorylation of a specific serine residue in HPr, a phosphocarrier protein of the phosphoenolpyruvate-dependent sugar phosphotransferase system (PTS). HprK/P also catalyzes the pyrophosphate-producing, inorganic phosphate-dependent dephosphorylation (phosphorolysis) of seryl-phosphorylated HPr (P-Ser-HPr). The chain is HPr kinase/phosphorylase from Chlorobium phaeobacteroides (strain DSM 266 / SMG 266 / 2430).